We begin with the raw amino-acid sequence, 425 residues long: Interferon regulatory factor 8 (425 aa).

Residues 7–114 constitute a DNA-binding region (IRF tryptophan pentad repeat); sequence GRRLRQWLIE…EPYKVYRIVP (108 aa).

Belongs to the IRF family.

The protein localises to the nucleus. The protein resides in the cytoplasm. Functionally, plays a role as a transcriptional activator or repressor. Specifically binds to the upstream regulatory region of type I IFN and IFN-inducible MHC class I genes (the interferon consensus sequence (ICS)). Plays a regulatory role in cells of the immune system. This chain is Interferon regulatory factor 8 (IRF8), found in Gallus gallus (Chicken).